A 590-amino-acid chain; its full sequence is Aspartate--tRNA(Asp/Asn) ligase (590 aa).

Residue E172 coordinates L-aspartate. The tract at residues Q196 to K199 is aspartate. R218 lines the L-aspartate pocket. ATP-binding positions include R218–E220 and Q227. An L-aspartate-binding site is contributed by H449. E484 serves as a coordination point for ATP. Position 491 (R491) interacts with L-aspartate. G536–R539 is an ATP binding site.

It belongs to the class-II aminoacyl-tRNA synthetase family. Type 1 subfamily. Homodimer.

Its subcellular location is the cytoplasm. It catalyses the reaction tRNA(Asx) + L-aspartate + ATP = L-aspartyl-tRNA(Asx) + AMP + diphosphate. In terms of biological role, aspartyl-tRNA synthetase with relaxed tRNA specificity since it is able to aspartylate not only its cognate tRNA(Asp) but also tRNA(Asn). Reaction proceeds in two steps: L-aspartate is first activated by ATP to form Asp-AMP and then transferred to the acceptor end of tRNA(Asp/Asn). The sequence is that of Aspartate--tRNA(Asp/Asn) ligase from Francisella tularensis subsp. holarctica (strain FTNF002-00 / FTA).